We begin with the raw amino-acid sequence, 184 residues long: Fanconi anemia core complex-associated protein 20 (184 aa).

Disordered stretches follow at residues 1–30 (MEEE…PWFL) and 46–81 (TVGG…TVPP). Residues 7–16 (LRGRLSRRRP) are compositionally biased toward basic residues. Positions 47-57 (VGGNTDWTPNS) are enriched in polar residues. Ser119 carries the post-translational modification Phosphoserine. The UBZ2-type zinc finger occupies 148-184 (LLNCPLCQKAFDPKLTQLDVDSHLAQCLAESTEDVVW). Residues Cys151, Cys154, His170, and Cys174 each contribute to the Zn(2+) site.

As to quaternary structure, component of the Fanconi anemia (FA) complex. Interacts with FANCA; interaction is direct. Interacts with REV1.

The protein resides in the nucleus. The protein localises to the chromosome. Component of the Fanconi anemia (FA) complex required to recruit the FA complex to DNA interstrand cross-links (ICLs) and promote ICLs repair. Following DNA damage recognizes and binds 'Lys-63'-linked ubiquitin generated by RNF8 at ICLs and recruits other components of the FA complex. Promotes translesion synthesis via interaction with REV1. The protein is Fanconi anemia core complex-associated protein 20 of Rattus norvegicus (Rat).